The following is a 531-amino-acid chain: Na(+)/H(+) antiporter NhaB (531 aa).

Helical transmembrane passes span 23-45 (IAIL…VAGW), 66-86 (PGGL…SQVL), 97-117 (LLLI…LFVF), 130-164 (VSLM…FYSI), 206-226 (LLMH…VGEP), 244-264 (LRMG…CFLV), 307-327 (AFVG…VGLI), 352-372 (EEAL…GVII), 393-413 (LVIF…VFVG), 451-471 (ATPN…APLI), and 478-498 (MVWM…LAIE).

Belongs to the NhaB Na(+)/H(+) (TC 2.A.34) antiporter family.

It is found in the cell inner membrane. The catalysed reaction is 2 Na(+)(in) + 3 H(+)(out) = 2 Na(+)(out) + 3 H(+)(in). Its function is as follows. Na(+)/H(+) antiporter that extrudes sodium in exchange for external protons. This Shewanella loihica (strain ATCC BAA-1088 / PV-4) protein is Na(+)/H(+) antiporter NhaB.